Reading from the N-terminus, the 442-residue chain is 3-oxoacyl-[acyl-carrier-protein] synthase homolog (442 aa).

The Ketosynthase family 3 (KS3) domain maps to 2 to 438 (SRRVVITGLG…GVNTSLLFKK (437 aa)). Catalysis depends on for beta-ketoacyl synthase activity residues Cys187, His322, and His362.

It belongs to the thiolase-like superfamily. Beta-ketoacyl-ACP synthases family.

Its subcellular location is the mitochondrion. It carries out the reaction a fatty acyl-[ACP] + malonyl-[ACP] + H(+) = a 3-oxoacyl-[ACP] + holo-[ACP] + CO2. Functionally, possibly involved in the synthesis of a specialized molecule, probably related to a fatty acid, which is essential for mitochondrial respiration. Is essential for oxygen uptake and the presence of cytochromes A and B. In Saccharomyces cerevisiae (strain ATCC 204508 / S288c) (Baker's yeast), this protein is 3-oxoacyl-[acyl-carrier-protein] synthase homolog (CEM1).